Here is a 55-residue protein sequence, read N- to C-terminus: uncharacterized protein (55 aa).

The tract at residues 1-22 is disordered; sequence MPALKSHVRPNSAAPARRQPWP.

This is an uncharacterized protein from Rhodobacter capsulatus (Rhodopseudomonas capsulata).